Here is a 101-residue protein sequence, read N- to C-terminus: U1-sicaritoxin-Li1a (101 aa).

Positions 1-19 (MRFLVGAVLVVVLVACATA) are cleaved as a signal peptide. Residues 20-35 (FESDAETFKSLVVEER) constitute a propeptide that is removed on maturation. Cystine bridges form between C37–C54, C45–C59, C53–C72, and C61–C70. K81 carries the post-translational modification Lysine amide. Positions 85–101 (ALLLPVETHRLLFPEQW) are excised as a propeptide.

The protein belongs to the neurotoxin 28 (Litx) family. As to expression, expressed by the venom gland.

Its subcellular location is the secreted. In terms of biological role, toxin active against insects (S.frugiperda larvae). May act on sodium (Nav) or calcium channels (Cav). The chain is U1-sicaritoxin-Li1a from Loxosceles intermedia (Brown spider).